A 123-amino-acid polypeptide reads, in one-letter code: UPF0482 protein YE2026 (123 aa).

The first 31 residues, 1-31, serve as a signal peptide directing secretion; sequence MKITSLPRLMRVFLPVAVLALPLAWQTAALA. The tract at residues 47 to 66 is disordered; that stretch reads GNNDPMSKEQARQSQQQWDD.

The protein belongs to the UPF0482 family.

The protein is UPF0482 protein YE2026 of Yersinia enterocolitica serotype O:8 / biotype 1B (strain NCTC 13174 / 8081).